Reading from the N-terminus, the 607-residue chain is Elongation factor 4 (607 aa).

The tr-type G domain occupies 11–193 (ENIRNFSIIA…KIVEVVPAPD (183 aa)). Residues 23–28 (DHGKST) and 140–143 (NKID) each bind GTP.

This sequence belongs to the TRAFAC class translation factor GTPase superfamily. Classic translation factor GTPase family. LepA subfamily.

The protein localises to the cell membrane. The catalysed reaction is GTP + H2O = GDP + phosphate + H(+). In terms of biological role, required for accurate and efficient protein synthesis under certain stress conditions. May act as a fidelity factor of the translation reaction, by catalyzing a one-codon backward translocation of tRNAs on improperly translocated ribosomes. Back-translocation proceeds from a post-translocation (POST) complex to a pre-translocation (PRE) complex, thus giving elongation factor G a second chance to translocate the tRNAs correctly. Binds to ribosomes in a GTP-dependent manner. The polypeptide is Elongation factor 4 (Staphylococcus aureus (strain N315)).